The chain runs to 211 residues: Pyridoxine/pyridoxamine 5'-phosphate oxidase (211 aa).

Substrate is bound by residues 7–10 (RREY) and K65. FMN is bound by residues 60-65 (RIVLLK), 75-76 (YT), R81, K82, and Q104. Residues Y122, R126, and S130 each contribute to the substrate site. Residues 139 to 140 (QS) and W184 each bind FMN. 190-192 (RLH) contributes to the substrate binding site. Residue R194 coordinates FMN.

Belongs to the pyridoxamine 5'-phosphate oxidase family. As to quaternary structure, homodimer. The cofactor is FMN.

It catalyses the reaction pyridoxamine 5'-phosphate + O2 + H2O = pyridoxal 5'-phosphate + H2O2 + NH4(+). The catalysed reaction is pyridoxine 5'-phosphate + O2 = pyridoxal 5'-phosphate + H2O2. The protein operates within cofactor metabolism; pyridoxal 5'-phosphate salvage; pyridoxal 5'-phosphate from pyridoxamine 5'-phosphate: step 1/1. It functions in the pathway cofactor metabolism; pyridoxal 5'-phosphate salvage; pyridoxal 5'-phosphate from pyridoxine 5'-phosphate: step 1/1. Functionally, catalyzes the oxidation of either pyridoxine 5'-phosphate (PNP) or pyridoxamine 5'-phosphate (PMP) into pyridoxal 5'-phosphate (PLP). In Vibrio cholerae serotype O1 (strain ATCC 39315 / El Tor Inaba N16961), this protein is Pyridoxine/pyridoxamine 5'-phosphate oxidase.